A 607-amino-acid polypeptide reads, in one-letter code: Elongation factor 4 (607 aa).

Residues 11–193 enclose the tr-type G domain; it reads ENIRNFSIIA…KIVEVVPAPD (183 aa). GTP contacts are provided by residues 23-28 and 140-143; these read DHGKST and NKID.

Belongs to the TRAFAC class translation factor GTPase superfamily. Classic translation factor GTPase family. LepA subfamily.

It localises to the cell membrane. The catalysed reaction is GTP + H2O = GDP + phosphate + H(+). Its function is as follows. Required for accurate and efficient protein synthesis under certain stress conditions. May act as a fidelity factor of the translation reaction, by catalyzing a one-codon backward translocation of tRNAs on improperly translocated ribosomes. Back-translocation proceeds from a post-translocation (POST) complex to a pre-translocation (PRE) complex, thus giving elongation factor G a second chance to translocate the tRNAs correctly. Binds to ribosomes in a GTP-dependent manner. In Staphylococcus aureus (strain USA300), this protein is Elongation factor 4.